A 170-amino-acid polypeptide reads, in one-letter code: Ribosome maturation factor RimM (170 aa).

The 74-residue stretch at 97–170 folds into the PRC barrel domain; the sequence is HPDEYYWVDL…RIVVDWDPEF (74 aa).

The protein belongs to the RimM family. Binds ribosomal protein uS19.

Its subcellular location is the cytoplasm. An accessory protein needed during the final step in the assembly of 30S ribosomal subunit, possibly for assembly of the head region. Essential for efficient processing of 16S rRNA. May be needed both before and after RbfA during the maturation of 16S rRNA. It has affinity for free ribosomal 30S subunits but not for 70S ribosomes. This chain is Ribosome maturation factor RimM, found in Xylella fastidiosa (strain M23).